The primary structure comprises 3313 residues: Cadherin EGF LAG seven-pass G-type receptor 3 (3313 aa).

The signal sequence occupies residues 1–31; that stretch reads MARRPLWWGLPGPSTPLLLLLLFSLFPSSRE. At 32-2538 the chain is on the extracellular side; sequence EMGGGGDQGW…RLEGDLELLA (2507 aa). 2 disordered regions span residues 148–187 and 205–269; these read LPLD…RNGR and EPGH…RMRS. Over residues 258-268 the composition is skewed to basic and acidic residues; the sequence is HESRTAPERMR. 9 Cadherin domains span residues 317-424, 425-536, 537-642, 643-747, 748-849, 850-952, 953-1058, 1059-1160, and 1161-1257; these read PQYN…APVF, EQAQ…APQF, SEKR…SPIF, VSTP…RPEF, TMKE…RPVF, QSAH…APQF, VASH…APVF, PAEE…SPVL, and NNFQ…VVII. Residue N623 is glycosylated (N-linked (GlcNAc...) asparagine). An N-linked (GlcNAc...) asparagine glycan is attached at N838. N-linked (GlcNAc...) asparagine glycans are attached at residues N1173, N1213, N1308, and N1318. An EGF-like 1; calcium-binding domain is found at 1366 to 1424; the sequence is DDNVCLREPCENYMKCVSVLRFDSSAPFLASASTLFRPIQPIAGLRCRCPPGFTGDFCE. 9 disulfide bridges follow: C1370–C1381, C1375–C1412, C1414–C1423, C1430–C1441, C1435–C1450, C1452–C1461, C1470–C1481, C1475–C1491, and C1493–C1504. The region spanning 1426-1462 is the EGF-like 2; calcium-binding domain; the sequence is ELDLCYSNPCRNGGACARREGGYTCVCRPRFTGEDCE. Positions 1466–1505 constitute an EGF-like 3; calcium-binding domain; the sequence is EAGRCVPGVCRNGGTCTNAPNGGFRCQCPAGGAFEGPRCE. The Laminin G-like 1 domain occupies 1506-1710; sequence VAARSFPPSS…VANNGTTAGC (205 aa). N-linked (GlcNAc...) asparagine glycans are attached at residues N1640 and N1704. Cystine bridges form between C1684/C1710, C1717/C1728, C1722/C1737, and C1739/C1748. The 37-residue stretch at 1713 to 1749 folds into the EGF-like 4; calcium-binding domain; that stretch reads KSHFCASGPCKNGGLCSERWGGFSCDCPVGFGGKDCR. One can recognise a Laminin G-like 2 domain in the interval 1753–1935; the sequence is AHPYHFQGNG…SHRINVEPGC (183 aa). A glycan (N-linked (GlcNAc...) asparagine) is linked at N1761. 9 disulfides stabilise this stretch: C1906–C1935, C1941–C1952, C1946–C1961, C1963–C1972, C1976–C1987, C1981–C1999, C2001–C2010, C2018–C2031, and C2033–C2043. Residues 1937 to 1972 enclose the EGF-like 5; calcium-binding domain; that stretch reads VTNPCASGPCPPHANCKDLWQTFSCTCWPGYYGPGC. A (3R)-3-hydroxyaspartate modification is found at D1954. Residues 1973–2011 enclose the EGF-like 6; calcium-binding domain; it reads VDACLLNPCQNQGSCRHLQGGPHGYTCDCASGYFGQHCE. One can recognise an EGF-like 7; calcium-binding domain in the interval 2012-2044; that stretch reads HRMDQQCPRGWWGSPTCGPCNCDVHKGFDPNCN. N2044 is a glycosylation site (N-linked (GlcNAc...) asparagine). An EGF-like 8; calcium-binding domain is found at 2046-2081; sequence TSGQCHCKEFHYRPRGSDSCLPCDCYPVGSTSRSCA. Cystine bridges form between C2050/C2065, C2052/C2068, C2070/C2080, C2089/C2098, and C2101/C2113. A Laminin EGF-like domain is found at 2068-2115; sequence CDCYPVGSTSRSCAPHSGQCPCRPGALGRQCNSCDSPFAEVTASGCRV. A Phosphotyrosine modification is found at Y2117. 5 N-linked (GlcNAc...) asparagine glycosylation sites follow: N2173, N2192, N2382, N2472, and N2504. Positions 2356 to 2395 are disordered; the sequence is HTHVLLPSQSPQPSPSEVLPTSSNAENATASGVVSPPAPL. In terms of domain architecture, GAIN-B spans 2364-2528; sequence QSPQPSPSEV…GVLMDASPRE (165 aa). The span at 2374–2387 shows a compositional bias: polar residues; sequence LPTSSNAENATASG. 2 cysteine pairs are disulfide-bonded: C2478/C2510 and C2498/C2512. A GPS region spans residues 2478-2528; that stretch reads CVQWDPPGPADQHGMWTARDCELVHRNGSHARCRCSRTGTFGVLMDASPRE. A helical transmembrane segment spans residues 2539–2559; the sequence is VFTHVVVAASVTALVLTAAVL. Residues 2560–2570 lie on the Cytoplasmic side of the membrane; that stretch reads LSLRSLKSNVR. The chain crosses the membrane as a helical span at residues 2571–2591; the sequence is GIHANVAAALGVAELLFLLGI. The Extracellular segment spans residues 2592–2599; that stretch reads HRTHNQLL. The helical transmembrane segment at 2600–2620 threads the bilayer; it reads CTVVAILLHYFFLSTFAWLLV. The Cytoplasmic portion of the chain corresponds to 2621–2641; it reads QGLHLYRMQVEPRNVDRGAMR. The helical transmembrane segment at 2642–2662 threads the bilayer; that stretch reads FYHALGWGVPAVLLGLAVGLD. Topologically, residues 2663 to 2679 are extracellular; it reads PEGYGNPDFCWISIHEP. The chain crosses the membrane as a helical span at residues 2680 to 2700; the sequence is LIWSFAGPIVLVIVMNGIMFL. The Cytoplasmic portion of the chain corresponds to 2701–2724; sequence LAARTSCSTGQREAKKTSVLRTLR. A helical membrane pass occupies residues 2725–2745; it reads SSFLLLLLVSASWLFGLLAVN. Residues 2746 to 2752 are Extracellular-facing; that stretch reads HSVLAFH. The chain crosses the membrane as a helical span at residues 2753-2773; it reads YLHAGLCGLQGLAVLLLFCVL. At 2774–3313 the chain is on the cytoplasmic side; sequence NADARAAWTP…SEVPRSEGHS (540 aa). Disordered regions lie at residues 2887-2927 and 2977-3004; these read AGAD…RPLR and SNKD…RAQR. The span at 2889-2899 shows a compositional bias: acidic residues; the sequence is ADSDSDSDLSL. A compositionally biased stretch (basic residues) spans 2918-2927; that stretch reads TRGRFQRPLR. The residue at position 3050 (Y3050) is a Phosphotyrosine. Disordered regions lie at residues 3091–3242 and 3255–3313; these read APVL…PSTE and NSSA…EGHS. Residue S3098 is modified to Phosphoserine. A compositionally biased stretch (basic and acidic residues) spans 3102–3119; it reads SQERLDTAPARLEPRDRG. Composition is skewed to low complexity over residues 3178 to 3197 and 3255 to 3289; these read QRPL…SLSR and NSSA…PSTP. Residues 3290–3301 show a composition bias toward polar residues; that stretch reads RSATSHSISELS.

The protein belongs to the G-protein coupled receptor 2 family. LN-TM7 subfamily. Post-translationally, the iron and 2-oxoglutarate dependent 3-hydroxylation of aspartate and asparagine is (R) stereospecific within EGF domains. In terms of tissue distribution, expressed in the brain. Expressed in cerebellum, olfactory bulb, cerebral cortex, hippocampus and brain stem.

It localises to the cell membrane. Receptor that may have an important role in cell/cell signaling during nervous system formation. The sequence is that of Cadherin EGF LAG seven-pass G-type receptor 3 (Celsr3) from Rattus norvegicus (Rat).